Reading from the N-terminus, the 239-residue chain is Protein UL24 homolog (239 aa).

The segment at 212–239 (TPKLGNSKTSKRKRRNSKKQDFKKLVKN) is disordered. The segment covering 229–239 (KKQDFKKLVKN) has biased composition (basic and acidic residues).

Belongs to the herpesviridae UL24 family.

The protein localises to the virion. It is found in the host cytoplasm. Its subcellular location is the host nucleus. It localises to the host nucleolus. The protein resides in the host Golgi apparatus. Its function is as follows. May participate in nuclear egress of viral particles. Plays a role in the dispersal of several host nucleolar proteins including NCL/nucleolin and NPM1. Since deletion of host NCL/nucleolin negatively impact on nuclear egress, UL24 supposedly acts on this process through its effect on host nucleoli. The polypeptide is Protein UL24 homolog (U49) (Homo sapiens (Human)).